We begin with the raw amino-acid sequence, 1843 residues long: Proteasome activator complex subunit 4 (1843 aa).

Residues 1-11 (MEPAERAGVGE) are compositionally biased toward low complexity. The segment at 1 to 25 (MEPAERAGVGEPPEPGGRPEPGPRG) is disordered. Residues 12–22 (PPEPGGRPEPG) show a composition bias toward pro residues. 2 HEAT repeats span residues 475–519 (PEGP…LVDC) and 998–1037 (NFCC…NHSG). A Phosphoserine modification is found at Ser1121. HEAT repeat units lie at residues 1179 to 1217 (RVLP…QLKR) and 1354 to 1392 (DAFL…GSKH). At Ser1614 the chain carries Phosphoserine. 2 HEAT repeats span residues 1636 to 1674 (PHQV…YNLF) and 1680 to 1718 (EDAV…CNFL). The bromodomain-like (BRDL) stretch occupies residues 1650–1738 (ARSSSWHARY…EQLCKTKLPK (89 aa)). Residue Ser1746 is modified to Phosphoserine.

It belongs to the BLM10 family. As to quaternary structure, homodimer. Interacts with the 20S and 26S proteasomes. Component of the spermatoproteasome, a form of the proteasome specifically found in testis.

Its subcellular location is the cytoplasm. The protein localises to the cytosol. It is found in the nucleus. The protein resides in the nucleus speckle. Its function is as follows. Associated component of the proteasome that specifically recognizes acetylated histones and promotes ATP- and ubiquitin-independent degradation of core histones during spermatogenesis and DNA damage response. Recognizes and binds acetylated histones via its bromodomain-like (BRDL) region and activates the proteasome by opening the gated channel for substrate entry. Binds to the core proteasome via its C-terminus, which occupies the same binding sites as the proteasomal ATPases, opening the closed structure of the proteasome via an active gating mechanism. Component of the spermatoproteasome, a form of the proteasome specifically found in testis: binds to acetylated histones and promotes degradation of histones, thereby participating actively to the exchange of histones during spermatogenesis. Also involved in DNA damage response in somatic cells, by promoting degradation of histones following DNA double-strand breaks. The protein is Proteasome activator complex subunit 4 of Homo sapiens (Human).